The primary structure comprises 261 residues: 3beta-hydroxysteroid dehydrogenase 1 (261 aa).

Residues 65-66 (DV), Asn-92, Tyr-158, and Lys-162 contribute to the NAD(+) site. Tyr-158 (proton acceptor) is an active-site residue.

Belongs to the short-chain dehydrogenases/reductases (SDR) family.

It carries out the reaction 3-oxo-5beta-cholan-24-oate + NADH + H(+) = isolithocholate + NAD(+). The enzyme catalyses 12alpha-hydroxy-3-oxo-5beta-cholan-24-oate + NADH + H(+) = isodeoxycholate + NAD(+). The catalysed reaction is 7alpha,12alpha-dihydroxy-3-oxo-5beta-cholan-24-oate + NADH + H(+) = isocholate + NAD(+). It catalyses the reaction 3-oxochenodeoxycholate + NADH + H(+) = isochenodeoxycholate + NAD(+). Functionally, involved in the modification of secondary bile acids into iso-bile acids (3beta-bile acids) via epimerization of the 3-OH group through a 3-oxo-intermediate. Catalyzes the reduction of 12-alpha-hydroxy-3-oxo-5-beta-cholan-24-oate (3-oxo-DCA) and 3-oxo-5-beta-cholan-24-oate (3-oxo-LCA) to yield isodeoxycholate (isoDCA) and isolithocholate (isoLCA), respectively. Is also able to catalyze the reduction of 3-dehydrocholate (3-oxo-CA or 7alpha,12alpha-dihydroxy-3-oxo-5beta-cholan-24-oate) and 7-alpha-hydroxy-3-oxo-5-beta-cholan-24-oate (3-oxo-CDCA), into isocholate (isoCA) and isochenodeoxycholate (isoCDCA), respectively. Prefers NADH to NADPH as cosubstrate. The conversion of the abundant bile acid deoxycholate (DCA) into isoDCA by the gut bacterium E.lenta favors the growth of the keystone commensal genus Bacteroides, since isoDCA is less cytotoxic than its parent compound, DCA; iso-bile acids have thus a potential role in modulating gut community composition. This is 3beta-hydroxysteroid dehydrogenase 1 from Eggerthella lenta (strain ATCC 25559 / DSM 2243 / CCUG 17323 / JCM 9979 / KCTC 3265 / NCTC 11813 / VPI 0255 / 1899 B) (Eubacterium lentum).